The primary structure comprises 131 residues: Interleukin-13 (131 aa).

Residues 1–18 form the signal peptide; the sequence is MALWVTAVLALACLGGLA. N-linked (GlcNAc...) asparagine glycans are attached at residues asparagine 42, asparagine 52, and asparagine 75. Intrachain disulfides connect cysteine 51-cysteine 79 and cysteine 67-cysteine 93.

Belongs to the IL-4/IL-13 family. Interacts with IL13RA2.

It localises to the secreted. Functionally, cytokine that plays important roles in allergic inflammation and immune response to parasite infection. Synergizes with IL2 in regulating interferon-gamma synthesis. Stimulates B-cell proliferation, and activation of eosinophils, basophils, and mast cells. Plays an important role in controlling IL33 activity by modulating the production of transmembrane and soluble forms of interleukin-1 receptor-like 1/IL1RL1. Displays the capacity to antagonize Th1-driven proinflammatory immune response and downregulates synthesis of many proinflammatory cytokines including IL1, IL6, IL10, IL12 and TNF-alpha through a mechanism that partially involves suppression of NF-kappa-B. Also functions on nonhematopoietic cells, including endothelial cells where it induces vascular cell adhesion protein 1/VCAM1, which is important in the recruitment of eosinophils. Exerts its biological effects through its receptors which comprises the IL4R chain and the IL13RA1 chain, to activate JAK1 and TYK2, leading to the activation of STAT6. Aside from IL13RA1, another receptor IL13RA2 acts as a high affinity decoy for IL13 and mediates internalization and depletion of extracellular IL13. In Mus musculus (Mouse), this protein is Interleukin-13 (Il13).